Here is a 784-residue protein sequence, read N- to C-terminus: Ribosome biogenesis protein BOP1 homolog (784 aa).

Residues 1-11 (MTKKLALKRKG) are compositionally biased toward basic residues. The tract at residues 1–159 (MTKKLALKRK…DSDTSDEEDI (159 aa)) is disordered. Acidic residues-rich tracts occupy residues 27-36 (SENEEEEEDL), 45-54 (EDSTDDEGID), 62-73 (SEELQFESDEEG), and 84-111 (AEED…EDEE). Over residues 112 to 123 (KDSKLKQSDDKP) the composition is skewed to basic and acidic residues. A compositionally biased stretch (low complexity) spans 124–133 (SSSGAASKKA). The span at 138–148 (LSKRDTSKPEY) shows a compositional bias: basic and acidic residues. Residues 149 to 158 (QDSDTSDEED) are compositionally biased toward acidic residues. 7 WD repeats span residues 445–486 (GHTD…RTIE), 488–526 (DEVV…KVLV), 570–612 (THFK…SQIP), 615–653 (KSKG…LVKK), 656–695 (TNSK…KPYQ), 699–738 (LHRN…DLLQ), and 754–784 (RDEF…RLYT).

This sequence belongs to the WD repeat BOP1/ERB1 family.

Its subcellular location is the nucleus. The protein resides in the nucleolus. It localises to the nucleoplasm. Its function is as follows. Required for maturation of ribosomal RNAs and formation of the large ribosomal subunit. This is Ribosome biogenesis protein BOP1 homolog from Drosophila erecta (Fruit fly).